Reading from the N-terminus, the 314-residue chain is MAKGIMLHEVGEQVDLYLLIKSSTKGIASNGKPFLTLMLQDQSGDIEAKLWDAKQQDEVTYGPQTIVKVVGDIHHYRGRNQLKLRNIRPAGENENVKIDDFLETAPIPKNEMMDAVTQYIFEMKNPNIQRITRHLVKKYGKEFIDYPAATKNHHEFVSGLAYHVVSMLNLAKSVADLYPSLDRDLLYAGVILHDLGKVKELSGPVSTTYTVEGNLLGHISIMVTEIAKAAEELQIDSEEVLILQHLILSHHGKPEWGSPKPPMVKEAEILHYIDNLDAKINMMDRALERVKPGEYTERVFALDNRSFYKPVFHK.

The OB DNA-binding region spans 14 to 90 (VDLYLLIKSS…QLKLRNIRPA (77 aa)). Residues 163-279 (HVVSMLNLAK…LHYIDNLDAK (117 aa)) form the HD domain.

It belongs to the YhaM family.

Functionally, shows a 3'-5' exoribonuclease activity. The sequence is that of 3'-5' exoribonuclease YhaM from Bacillus licheniformis (strain ATCC 14580 / DSM 13 / JCM 2505 / CCUG 7422 / NBRC 12200 / NCIMB 9375 / NCTC 10341 / NRRL NRS-1264 / Gibson 46).